A 658-amino-acid chain; its full sequence is DNA mismatch repair protein MutL (658 aa).

Positions 114–130 (RQEDSSHATQVKAEDGK) are enriched in basic and acidic residues. Disordered regions lie at residues 114-138 (RQEDSSHATQVKAEDGKLSSPTAAA) and 355-405 (PSEN…HSLS).

The protein belongs to the DNA mismatch repair MutL/HexB family.

Its function is as follows. This protein is involved in the repair of mismatches in DNA. It is required for dam-dependent methyl-directed DNA mismatch repair. May act as a 'molecular matchmaker', a protein that promotes the formation of a stable complex between two or more DNA-binding proteins in an ATP-dependent manner without itself being part of a final effector complex. The sequence is that of DNA mismatch repair protein MutL from Neisseria gonorrhoeae (strain ATCC 700825 / FA 1090).